The primary structure comprises 128 residues: KESPAMKFERQHMDSGSTSSSNPTYCNQMMKRRNMTQGWCKPVNTFVHEPLADVQAICLQKNITCKNGQSNCYQSSSSMHITDCRLTSGSKYPNCAYQTSQKERHIIVACEGNPYVPVHFDASVEVST.

The segment covering 1–13 (KESPAMKFERQHM) has biased composition (basic and acidic residues). The tract at residues 1-26 (KESPAMKFERQHMDSGSTSSSNPTYC) is disordered. Residues Lys-7 and Arg-10 each coordinate substrate. His-12 (proton acceptor) is an active-site residue. Over residues 14-26 (DSGSTSSSNPTYC) the composition is skewed to polar residues. Cystine bridges form between Cys-26/Cys-84, Cys-40/Cys-95, Cys-58/Cys-110, and Cys-65/Cys-72. A glycan (N-linked (GlcNAc...) asparagine) is linked at Asn-34. Residue 41-45 (KPVNT) participates in substrate binding. An N-linked (GlcNAc...) asparagine glycan is attached at Asn-62. 2 residues coordinate substrate: Lys-66 and Arg-85. His-119 acts as the Proton donor in catalysis.

The protein belongs to the pancreatic ribonuclease family. In terms of assembly, monomer. Interacts with and forms tight 1:1 complexes with RNH1. Dimerization of two such complexes may occur. Interaction with RNH1 inhibits this protein. In terms of tissue distribution, pancreas.

It localises to the secreted. It carries out the reaction an [RNA] containing cytidine + H2O = an [RNA]-3'-cytidine-3'-phosphate + a 5'-hydroxy-ribonucleotide-3'-[RNA].. It catalyses the reaction an [RNA] containing uridine + H2O = an [RNA]-3'-uridine-3'-phosphate + a 5'-hydroxy-ribonucleotide-3'-[RNA].. In terms of biological role, endonuclease that catalyzes the cleavage of RNA on the 3' side of pyrimidine nucleotides. Acts on single-stranded and double-stranded RNA. The chain is Ribonuclease pancreatic (RNASE1) from Equus caballus (Horse).